The primary structure comprises 491 residues: MTCPNSSCVFEDKMCQGNKTAPANDAQLTPLVVVLSTISLVTVGLNLLVLYAVRSERKLHTVGNLYIVSLSVADLIVGVVVMPMNILYLLMSRWSLGRPLCLFWLSMDYVASTASIFSVFILCIDRYRSVQQPLKYLRYRTKTRASITILAAWFLSFLWIIPILGWRHFQPKTPEPREDKCETDFYNVTWFKVMTAIINFYLPTLLMLWFYAKIYKAVRQHCQHRELINGSFPSFSDMKMKPENLQVGAKKPGKESPWEVLKRKPKDTGGGPVLKPPSQEPKEVTSPGVFSQEKEEKDGELGKFYCFPLDTVQAQPEAEGSGRGYATINQSQNQLEMGEQGLSMPGAKEALEDQILGDSQSFSRTDSDTPAEPAPAKGKSRSESSTGLEYIKFTWKRLRSHSRQYVSGLHMNRERKAAKQLGFIMAAFIICWIPYFIFFMVIAFCESCCNQHVHMFTIWLGYINSTLNPLIYPLCNENFKKTFKKILHIRS.

At 1 to 30 (MTCPNSSCVFEDKMCQGNKTAPANDAQLTP) the chain is on the extracellular side. Asn-5 and Asn-18 each carry an N-linked (GlcNAc...) asparagine glycan. Residues 31 to 51 (LVVVLSTISLVTVGLNLLVLY) traverse the membrane as a helical segment. Residues 52 to 65 (AVRSERKLHTVGNL) are Cytoplasmic-facing. Residues 66–90 (YIVSLSVADLIVGVVVMPMNILYLL) traverse the membrane as a helical segment. The Extracellular portion of the chain corresponds to 91–98 (MSRWSLGR). The chain crosses the membrane as a helical span at residues 99-124 (PLCLFWLSMDYVASTASIFSVFILCI). Cys-101 and Cys-181 form a disulfide bridge. Residues Asp-108 and Thr-113 each contribute to the histamine site. Residues 108–113 (DYVAST) form an important for agonist binding region. The Cytoplasmic portion of the chain corresponds to 125 to 145 (DRYRSVQQPLKYLRYRTKTRA). A phosphothreonine mark is found at Thr-141 and Thr-143. The helical transmembrane segment at 146 to 165 (SITILAAWFLSFLWIIPILG) threads the bilayer. At 166–189 (WRHFQPKTPEPREDKCETDFYNVT) the chain is on the extracellular side. A helical membrane pass occupies residues 190–212 (WFKVMTAIINFYLPTLLMLWFYA). A histamine-binding site is contributed by Asn-199. Residues 213–420 (KIYKAVRQHC…MNRERKAAKQ (208 aa)) lie on the Cytoplasmic side of the membrane. Residue Ser-231 is modified to Phosphoserine. 2 disordered regions span residues 246–297 (QVGA…KEEK) and 360–385 (QSFS…SESS). The span at 252–262 (PGKESPWEVLK) shows a compositional bias: basic and acidic residues. Phosphoserine occurs at positions 384, 400, and 402. A helical membrane pass occupies residues 421 to 444 (LGFIMAAFIICWIPYFIFFMVIAF). The tract at residues 428–432 (FIICW) is important for agonist binding. Residue Tyr-435 coordinates histamine. Cys-445 and Cys-448 are joined by a disulfide. The Extracellular segment spans residues 445-450 (CESCCN). The helical transmembrane segment at 451–473 (QHVHMFTIWLGYINSTLNPLIYP) threads the bilayer. Residues 474-491 (LCNENFKKTFKKILHIRS) lie on the Cytoplasmic side of the membrane.

It belongs to the G-protein coupled receptor 1 family. In terms of processing, phosphorylation at sites in the second and third cytoplasmic loops independently contribute to agonist-induced receptor down-regulation. As to expression, brain, lung, small intestine, uterus, adrenal medulla and spleen.

It is found in the cell membrane. Functionally, G-protein-coupled receptor for histamine, a biogenic amine that functions as an immune modulator and a neurotransmitter. Through the H1 receptor, histamine mediates the contraction of smooth muscles and increases capillary permeability due to contraction of terminal venules. Also mediates neurotransmission in the central nervous system and thereby regulates circadian rhythms, emotional and locomotor activities as well as cognitive functions. The protein is Histamine H1 receptor of Bos taurus (Bovine).